The sequence spans 260 residues: Histidinol-phosphatase (260 aa).

4 residues coordinate Mg(2+): E67, D83, I85, and D86. E67 provides a ligand contact to substrate. Residues 85–88 (IDGT), R185, and D213 contribute to the substrate site. D213 contributes to the Mg(2+) binding site.

It belongs to the inositol monophosphatase superfamily. Requires Mg(2+) as cofactor.

It carries out the reaction L-histidinol phosphate + H2O = L-histidinol + phosphate. The protein operates within amino-acid biosynthesis; L-histidine biosynthesis; L-histidine from 5-phospho-alpha-D-ribose 1-diphosphate: step 8/9. Its function is as follows. Catalyzes the dephosphorylation of histidinol-phosphate to histidinol, the direct precursor of histidine. The chain is Histidinol-phosphatase (hisN) from Mycobacterium tuberculosis (strain ATCC 25618 / H37Rv).